The sequence spans 1481 residues: Cystic fibrosis transmembrane conductance regulator (1481 aa).

The Cytoplasmic portion of the chain corresponds to 1–77; it reads MQRSPLEKAS…KLINALRRCF (77 aa). The chain crosses the membrane as a helical span at residues 78-98; sequence FWRFMFYGILLYLGEVTKAVQ. In terms of domain architecture, ABC transmembrane type-1 1 spans 81–365; sequence FMFYGILLYL…WAVQTWYDSL (285 aa). The Extracellular segment spans residues 99 to 122; that stretch reads PLLLGRIIASYDPDNKVERSIAIY. Residues 123 to 146 form a helical membrane-spanning segment; the sequence is LGIGLCLLFIVRMLLLHPAIFGLH. Residues 147 to 195 are Cytoplasmic-facing; that stretch reads HIGMQMRIAMFSLIYKKILKLSSRVLDKISIGQLVSLLSNNLNKFDEGL. A helical transmembrane segment spans residues 196-216; the sequence is ALAHFVWIAPLQVMLLMGLLW. Residues 217–222 lie on the Extracellular side of the membrane; it reads ELLQAS. A helical transmembrane segment spans residues 223-243; it reads AFCGLGFLIVLALFQSGLGRM. Residues 244-298 are Cytoplasmic-facing; that stretch reads MMKYRDQRAGKINERLVITSEMIENIQSVKAYCWEEAMEKMIENLRQTELKLTRK. A helical transmembrane segment spans residues 299-319; sequence AAYVRYFNSSAFFFSGFFVVF. The Extracellular segment spans residues 320–339; it reads LSVLPYALIKGIILRKIFTT. A helical membrane pass occupies residues 340-358; that stretch reads ISFCIVLRMAVTRQFPWAV. Residues 359–858 lie on the Cytoplasmic side of the membrane; it reads QTWYDSLGAI…YLRYITVHKS (500 aa). Residues W401, 458–465, and Q493 each bind ATP; that span reads GSTGAGKT. The ABC transporter 1 domain occupies 423–646; the sequence is NGDNSLFFSN…RPDFSSKLMG (224 aa). C524 carries the S-palmitoyl cysteine lipid modification. S549 and S660 each carry phosphoserine. The disordered R region stretch occupies residues 654–831; sequence SAERRNSILT…EEINEEDLKE (178 aa). At S670 the chain carries Phosphoserine; by PKA. A Phosphoserine modification is found at S686. A Glycyl lysine isopeptide (Lys-Gly) (interchain with G-Cter in ubiquitin) cross-link involves residue K688. A phosphoserine mark is found at S700 and S712. T717 is modified (phosphothreonine). Phosphoserine occurs at positions 737, 768, 790, 795, and 813. The helical transmembrane segment at 859 to 879 threads the bilayer; the sequence is LIFVLIWCLVIFLAEVAVSLV. The region spanning 859 to 1155 is the ABC transmembrane type-1 2 domain; the sequence is LIFVLIWCLV…AVNSSIDVDS (297 aa). Residues 880–918 are Extracellular-facing; it reads LLWLLGNAPAYNKGNSTISANSSYAVIITSTSAYYVFYI. N894 and N900 each carry an N-linked (GlcNAc...) asparagine glycan. A discontinuously helical transmembrane segment spans residues 919–939; the sequence is YVGVADTLLALGFFRGLPLVH. Topologically, residues 940 to 990 are cytoplasmic; that stretch reads TLITVSKILHHKMLHSVLQAPMSTLNALKAGGILNRFSKDIAILDDLLPLT. The chain crosses the membrane as a helical span at residues 991–1011; that stretch reads IFDFIQLLLIVIGAVAVVSVL. At 1012-1013 the chain is on the extracellular side; sequence QP. The helical transmembrane segment at 1014–1034 threads the bilayer; it reads YIFLATVPVIVTFIILRAYFL. At 1035-1095 the chain is on the cytoplasmic side; the sequence is HTSQQLKQLE…TANWFLYLST (61 aa). Residues 1096 to 1116 traverse the membrane as a helical segment; sequence LRWFQMRIEMVFVIFFIVVTF. The Extracellular segment spans residues 1117–1130; the sequence is ISILTTGEGEGQVG. A helical membrane pass occupies residues 1131–1151; it reads IILTLAMNIMGTLQWAVNSSI. Residues 1152-1481 lie on the Cytoplasmic side of the membrane; the sequence is DVDSLMRSVS…TEEEVQDTRL (330 aa). Positions 1211–1444 constitute an ABC transporter 2 domain; the sequence is MTVKDLTARY…KSLFRQAISP (234 aa). ATP-binding positions include Y1220 and 1245-1252; that span reads GRTGSGKS. The tract at residues 1387-1481 is interaction with GORASP2; that stretch reads RTLKQAFADC…TEEEVQDTRL (95 aa). C1396 is lipidated: S-palmitoyl cysteine. Residues S1445 and S1457 each carry the phosphoserine modification. The disordered stretch occupies residues 1449–1481; that stretch reads KLFPRRNSSKHKSRPPITALKEETEEEVQDTRL. Basic residues predominate over residues 1450–1462; that stretch reads LFPRRNSSKHKSR. Residues 1471–1481 show a composition bias toward acidic residues; that stretch reads ETEEEVQDTRL. The PDZ-binding signature appears at 1479-1481; the sequence is TRL.

The protein belongs to the ABC transporter superfamily. ABCC family. CFTR transporter (TC 3.A.1.202) subfamily. Monomer; does not require oligomerization for channel activity. May form oligomers in the membrane. Interacts with SLC26A3, SLC26A6 and NHERF1. Interacts with SHANK2. Interacts with MYO6. Interacts (via C-terminus) with GOPC (via PDZ domain); this promotes CFTR internalization and thereby decreases channel activity. Interacts with SLC4A7 through NHERF1. Found in a complex with MYO5B and RAB11A. Interacts with ANO1. Interacts with SLC26A8. Interacts with AHCYL1; the interaction increases CFTR activity. Interacts with CSE1L. The core-glycosylated form interacts with GORASP2 (via PDZ GRASP-type 1 domain) in respone to ER stress. Interacts with MARCHF2; the interaction leads to CFTR ubiqtuitination and degradation. Interacts with ADGRG2. N-glycosylated. Post-translationally, phosphorylated; cAMP treatment promotes phosphorylation and activates the channel. Dephosphorylation decreases the ATPase activity (in vitro). Phosphorylation at PKA sites activates the channel. Phosphorylation at PKC sites enhances the response to phosphorylation by PKA. Phosphorylated by AMPK; this inhibits channel activity. In terms of processing, ubiquitinated, leading to its degradation in the lysosome. Deubiquitination by USP10 in early endosomes enhances its endocytic recycling to the cell membrane. Ubiquitinated by RNF185 during ER stress. Ubiquitinated by MARCHF2.

The protein localises to the apical cell membrane. It is found in the early endosome membrane. Its subcellular location is the cell membrane. It localises to the recycling endosome membrane. The protein resides in the endoplasmic reticulum membrane. The protein localises to the nucleus. It catalyses the reaction ATP + H2O + closed Cl(-) channel = ADP + phosphate + open Cl(-) channel.. The enzyme catalyses chloride(in) = chloride(out). It carries out the reaction hydrogencarbonate(in) = hydrogencarbonate(out). The catalysed reaction is ATP + H2O = ADP + phosphate + H(+). In terms of biological role, epithelial ion channel that plays an important role in the regulation of epithelial ion and water transport and fluid homeostasis. Mediates the transport of chloride ions across the cell membrane. Possesses an intrinsic ATPase activity and utilizes ATP to gate its channel; the passive flow of anions through the channel is gated by cycles of ATP binding and hydrolysis by the ATP-binding domains. The ion channel is also permeable to HCO(3)(-); selectivity depends on the extracellular chloride concentration. Exerts its function also by modulating the activity of other ion channels and transporters. Contributes to the regulation of the pH and the ion content of the epithelial fluid layer. Modulates the activity of the epithelial sodium channel (ENaC) complex, in part by regulating the cell surface expression of the ENaC complex. May regulate bicarbonate secretion and salvage in epithelial cells by regulating the transporter SLC4A7. Can inhibit the chloride channel activity of ANO1. Plays a role in the chloride and bicarbonate homeostasis during sperm epididymal maturation and capacitation. The sequence is that of Cystic fibrosis transmembrane conductance regulator from Microcebus murinus (Gray mouse lemur).